A 563-amino-acid polypeptide reads, in one-letter code: Arginine--tRNA ligase (563 aa).

The 'HIGH' region motif lies at 120 to 130 (PNIAKPFHVGH).

It belongs to the class-I aminoacyl-tRNA synthetase family. Monomer.

The protein localises to the cytoplasm. The enzyme catalyses tRNA(Arg) + L-arginine + ATP = L-arginyl-tRNA(Arg) + AMP + diphosphate. The chain is Arginine--tRNA ligase from Clostridium botulinum (strain Alaska E43 / Type E3).